We begin with the raw amino-acid sequence, 31 residues long: Photosystem II reaction center protein T (31 aa).

The helical transmembrane segment at 3–23 threads the bilayer; it reads ALVYTFLLVTTLGILFFSIIF.

This sequence belongs to the PsbT family. As to quaternary structure, PSII is composed of 1 copy each of membrane proteins PsbA, PsbB, PsbC, PsbD, PsbE, PsbF, PsbH, PsbI, PsbJ, PsbK, PsbL, PsbM, PsbT, PsbX, PsbY, PsbZ, Psb30/Ycf12, at least 3 peripheral proteins of the oxygen-evolving complex and a large number of cofactors. It forms dimeric complexes.

It localises to the plastid. It is found in the cyanelle thylakoid membrane. Functionally, found at the monomer-monomer interface of the photosystem II (PS II) dimer, plays a role in assembly and dimerization of PSII. PSII is a light-driven water plastoquinone oxidoreductase, using light energy to abstract electrons from H(2)O, generating a proton gradient subsequently used for ATP formation. The protein is Photosystem II reaction center protein T of Cyanophora paradoxa.